We begin with the raw amino-acid sequence, 440 residues long: Nuclear hormone receptor family member nhr-130 (440 aa).

The nuclear receptor DNA-binding region spans 34–110 (LYTCQVCALP…VGMDPGRFQF (77 aa)). NR C4-type zinc fingers lie at residues 37–57 (CQVC…CRAC) and 74–93 (CKKQ…CKKC). The NR LBD domain occupies 184–439 (EKPLIARNNL…FSHPEMFEDT (256 aa)).

The protein belongs to the nuclear hormone receptor family.

The protein localises to the nucleus. Orphan nuclear receptor. This chain is Nuclear hormone receptor family member nhr-130 (nhr-130), found in Caenorhabditis elegans.